A 452-amino-acid chain; its full sequence is NADH-quinone oxidoreductase subunit H (452 aa).

Transmembrane regions (helical) follow at residues 28-48 (IILI…LMMI), 96-116 (VIYI…FSVI), 136-156 (LPVA…GIVL), 177-197 (VISY…YAGT), 210-230 (IWFA…MIGE), 264-286 (AEYV…GYLA), 301-321 (WWPA…FVWV), 335-355 (KLGW…VAVI), and 366-386 (YVTA…LWAW).

The protein belongs to the complex I subunit 1 family. NDH-1 is composed of 14 different subunits. Subunits NuoA, H, J, K, L, M, N constitute the membrane sector of the complex.

The protein localises to the cell membrane. It carries out the reaction a quinone + NADH + 5 H(+)(in) = a quinol + NAD(+) + 4 H(+)(out). Its function is as follows. NDH-1 shuttles electrons from NADH, via FMN and iron-sulfur (Fe-S) centers, to quinones in the respiratory chain. The immediate electron acceptor for the enzyme in this species is believed to be ubiquinone. Couples the redox reaction to proton translocation (for every two electrons transferred, four hydrogen ions are translocated across the cytoplasmic membrane), and thus conserves the redox energy in a proton gradient. This subunit may bind ubiquinone. The chain is NADH-quinone oxidoreductase subunit H from Thermobifida fusca (strain YX).